The following is a 50-amino-acid chain: Conotoxin Cal6.19 (50 aa).

Residues 1-22 (MKVTCVLVLTLMALTVCQVATA) form the signal peptide. 3 disulfides stabilise this stretch: C24–C37, C30–C41, and C36–C46.

In terms of tissue distribution, expressed by the venom duct.

The protein resides in the secreted. Probable neurotoxin. In Californiconus californicus (California cone), this protein is Conotoxin Cal6.19.